The following is a 229-amino-acid chain: Ribosomal RNA small subunit methyltransferase G (229 aa).

S-adenosyl-L-methionine-binding positions include Gly-71, 122-123, and Arg-139; that span reads AE.

Belongs to the methyltransferase superfamily. RNA methyltransferase RsmG family.

It localises to the cytoplasm. Its function is as follows. Specifically methylates the N7 position of a guanine in 16S rRNA. This chain is Ribosomal RNA small subunit methyltransferase G, found in Thermotoga neapolitana (strain ATCC 49049 / DSM 4359 / NBRC 107923 / NS-E).